A 535-amino-acid chain; its full sequence is Glucose-6-phosphate isomerase (535 aa).

The Proton donor role is filled by E347. Catalysis depends on residues H378 and K493.

This sequence belongs to the GPI family.

Its subcellular location is the cytoplasm. The catalysed reaction is alpha-D-glucose 6-phosphate = beta-D-fructose 6-phosphate. It participates in carbohydrate biosynthesis; gluconeogenesis. Its pathway is carbohydrate degradation; glycolysis; D-glyceraldehyde 3-phosphate and glycerone phosphate from D-glucose: step 2/4. Its function is as follows. Catalyzes the reversible isomerization of glucose-6-phosphate to fructose-6-phosphate. In Chlamydia felis (strain Fe/C-56) (Chlamydophila felis), this protein is Glucose-6-phosphate isomerase.